A 620-amino-acid chain; its full sequence is Apoptosis regulator MC163R (620 aa).

Residues Ala-113–Leu-133 traverse the membrane as a helical segment.

Its subcellular location is the host mitochondrion. It is found in the host membrane. Functionally, plays a role in the inhibition of host apoptosis. Prevents host TNF-alpha-induced mitochondrial membrane permeabilization and reduces caspase-3/CASP3 and PARP1 cleavage induced by the intrinsic apoptotic pathway. The chain is Apoptosis regulator MC163R (MC163R) from Homo sapiens (Human).